Reading from the N-terminus, the 404-residue chain is 4-hydroxy-3-methylbut-2-en-1-yl diphosphate synthase (ferredoxin) (404 aa).

Residues Cys-313, Cys-316, Cys-347, and Glu-354 each coordinate [4Fe-4S] cluster.

This sequence belongs to the IspG family. [4Fe-4S] cluster is required as a cofactor.

The enzyme catalyses (2E)-4-hydroxy-3-methylbut-2-enyl diphosphate + 2 oxidized [2Fe-2S]-[ferredoxin] + H2O = 2-C-methyl-D-erythritol 2,4-cyclic diphosphate + 2 reduced [2Fe-2S]-[ferredoxin] + H(+). The protein operates within isoprenoid biosynthesis; isopentenyl diphosphate biosynthesis via DXP pathway; isopentenyl diphosphate from 1-deoxy-D-xylulose 5-phosphate: step 5/6. Functionally, converts 2C-methyl-D-erythritol 2,4-cyclodiphosphate (ME-2,4cPP) into 1-hydroxy-2-methyl-2-(E)-butenyl 4-diphosphate. The sequence is that of 4-hydroxy-3-methylbut-2-en-1-yl diphosphate synthase (ferredoxin) from Crocosphaera subtropica (strain ATCC 51142 / BH68) (Cyanothece sp. (strain ATCC 51142)).